We begin with the raw amino-acid sequence, 139 residues long: Protein archease (139 aa).

Residues Asp12, Asp138, and Ile139 each contribute to the Ca(2+) site.

Belongs to the archease family.

Functionally, activates the tRNA-splicing ligase complex by facilitating the enzymatic turnover of catalytic subunit RtcB. Acts by promoting the guanylylation of RtcB, a key intermediate step in tRNA ligation. Can also alter the NTP specificity of RtcB such that ATP, dGTP or ITP is used efficiently. The protein is Protein archease of Saccharolobus islandicus (strain Y.G.57.14 / Yellowstone #1) (Sulfolobus islandicus).